The following is a 114-amino-acid chain: Large ribosomal subunit protein bL19 (114 aa).

This sequence belongs to the bacterial ribosomal protein bL19 family.

In terms of biological role, this protein is located at the 30S-50S ribosomal subunit interface and may play a role in the structure and function of the aminoacyl-tRNA binding site. The chain is Large ribosomal subunit protein bL19 from Bacillus mycoides (strain KBAB4) (Bacillus weihenstephanensis).